The following is a 239-amino-acid chain: 4-hydroxy-tetrahydrodipicolinate reductase (239 aa).

Residues 9–14, 78–80, and 104–107 each bind NAD(+); these read GINGKM, GTT, and APNF. The Proton donor/acceptor role is filled by His134. His135 contacts (S)-2,3,4,5-tetrahydrodipicolinate. Catalysis depends on Lys138, which acts as the Proton donor. 144 to 145 contributes to the (S)-2,3,4,5-tetrahydrodipicolinate binding site; sequence GT.

The protein belongs to the DapB family.

It is found in the cytoplasm. It catalyses the reaction (S)-2,3,4,5-tetrahydrodipicolinate + NAD(+) + H2O = (2S,4S)-4-hydroxy-2,3,4,5-tetrahydrodipicolinate + NADH + H(+). The catalysed reaction is (S)-2,3,4,5-tetrahydrodipicolinate + NADP(+) + H2O = (2S,4S)-4-hydroxy-2,3,4,5-tetrahydrodipicolinate + NADPH + H(+). It functions in the pathway amino-acid biosynthesis; L-lysine biosynthesis via DAP pathway; (S)-tetrahydrodipicolinate from L-aspartate: step 4/4. Catalyzes the conversion of 4-hydroxy-tetrahydrodipicolinate (HTPA) to tetrahydrodipicolinate. The chain is 4-hydroxy-tetrahydrodipicolinate reductase from Coxiella burnetii (strain Dugway 5J108-111).